The primary structure comprises 316 residues: Adenine deaminase (316 aa).

3 residues coordinate Zn(2+): histidine 14, histidine 16, and histidine 194. Residue glutamate 197 is the Proton donor of the active site. Aspartate 275 contacts Zn(2+). Substrate is bound at residue aspartate 276.

This sequence belongs to the metallo-dependent hydrolases superfamily. Adenosine and AMP deaminases family. Adenine deaminase type 2 subfamily. Requires Zn(2+) as cofactor.

It carries out the reaction adenine + H2O + H(+) = hypoxanthine + NH4(+). Functionally, catalyzes the hydrolytic deamination of adenine to hypoxanthine. Plays an important role in the purine salvage pathway and in nitrogen catabolism. The protein is Adenine deaminase of Pseudomonas aeruginosa (strain LESB58).